The sequence spans 194 residues: Outer-membrane lipoprotein LolB (194 aa).

An N-terminal signal peptide occupies residues 1–18; that stretch reads MKLLQHLTLIFCLLILTA. Residue Cys19 is the site of N-palmitoyl cysteine attachment. Cys19 carries the S-diacylglycerol cysteine lipid modification.

Belongs to the LolB family. In terms of assembly, monomer.

Its subcellular location is the cell outer membrane. Plays a critical role in the incorporation of lipoproteins in the outer membrane after they are released by the LolA protein. This Tolumonas auensis (strain DSM 9187 / NBRC 110442 / TA 4) protein is Outer-membrane lipoprotein LolB.